A 218-amino-acid chain; its full sequence is Ras-related protein RabO (218 aa).

Residue 15-22 (GDYCVGKT) coordinates GTP. Positions 37–45 (RNCNIGVDF) match the Effector region motif. GTP is bound by residues 63-67 (DTGGQ) and 122-125 (NKID). Cysteine 215 is modified (cysteine methyl ester). Cysteine 215 carries S-geranylgeranyl cysteine lipidation. A propeptide spans 216–218 (FIL) (removed in mature form).

This sequence belongs to the small GTPase superfamily. Rab family.

The protein localises to the cell membrane. This is Ras-related protein RabO (rabO) from Dictyostelium discoideum (Social amoeba).